The primary structure comprises 432 residues: Adenylosuccinate synthetase (432 aa).

Residues 12–18 and 40–42 contribute to the GTP site; these read GDEGKGK and GHT. Catalysis depends on D13, which acts as the Proton acceptor. Positions 13 and 40 each coordinate Mg(2+). IMP is bound by residues 13–16, 38–41, T131, R145, Q226, T241, and R305; these read DEGK and NAGH. The active-site Proton donor is the H41. 301 to 307 lines the substrate pocket; that stretch reads ATTGRPR. Residues R307, 333 to 335, and 415 to 417 contribute to the GTP site; these read KLD and STG.

This sequence belongs to the adenylosuccinate synthetase family. In terms of assembly, homodimer. Mg(2+) serves as cofactor.

It is found in the cytoplasm. The catalysed reaction is IMP + L-aspartate + GTP = N(6)-(1,2-dicarboxyethyl)-AMP + GDP + phosphate + 2 H(+). It participates in purine metabolism; AMP biosynthesis via de novo pathway; AMP from IMP: step 1/2. Functionally, plays an important role in the de novo pathway of purine nucleotide biosynthesis. Catalyzes the first committed step in the biosynthesis of AMP from IMP. The polypeptide is Adenylosuccinate synthetase (Magnetococcus marinus (strain ATCC BAA-1437 / JCM 17883 / MC-1)).